The chain runs to 231 residues: Ribonuclease 3 (231 aa).

Residues 3 to 130 (MHEFFENFGI…VTAAIYLDQT (128 aa)) enclose the RNase III domain. Mg(2+) is bound at residue E43. Residue D47 is part of the active site. Positions 116 and 119 each coordinate Mg(2+). The active site involves E119. One can recognise a DRBM domain in the interval 157-228 (DYKSELQEII…AKDCLNKLKK (72 aa)).

Belongs to the ribonuclease III family. In terms of assembly, homodimer. The cofactor is Mg(2+).

Its subcellular location is the cytoplasm. The catalysed reaction is Endonucleolytic cleavage to 5'-phosphomonoester.. Its function is as follows. Digests double-stranded RNA. Involved in the processing of primary rRNA transcript to yield the immediate precursors to the large and small rRNAs (23S and 16S). Processes some mRNAs, and tRNAs when they are encoded in the rRNA operon. Processes pre-crRNA and tracrRNA of type II CRISPR loci if present in the organism. The chain is Ribonuclease 3 from Mesoplasma florum (strain ATCC 33453 / NBRC 100688 / NCTC 11704 / L1) (Acholeplasma florum).